The sequence spans 474 residues: L-arabinose isomerase 2 (474 aa).

The Mn(2+) site is built by E306, E331, H348, and H447.

It belongs to the arabinose isomerase family. It depends on Mn(2+) as a cofactor.

It catalyses the reaction beta-L-arabinopyranose = L-ribulose. Its pathway is carbohydrate degradation; L-arabinose degradation via L-ribulose; D-xylulose 5-phosphate from L-arabinose (bacterial route): step 1/3. Functionally, catalyzes the conversion of L-arabinose to L-ribulose. The protein is L-arabinose isomerase 2 of Bacillus licheniformis (strain ATCC 14580 / DSM 13 / JCM 2505 / CCUG 7422 / NBRC 12200 / NCIMB 9375 / NCTC 10341 / NRRL NRS-1264 / Gibson 46).